Here is a 274-residue protein sequence, read N- to C-terminus: NADPH-dependent 7-cyano-7-deazaguanine reductase (274 aa).

80-82 (VES) contacts substrate. 82-83 (SK) is a binding site for NADPH. The active-site Thioimide intermediate is the Cys-181. The Proton donor role is filled by Asp-188. 220-221 (HE) contributes to the substrate binding site. Position 249–250 (249–250 (RG)) interacts with NADPH.

This sequence belongs to the GTP cyclohydrolase I family. QueF type 2 subfamily. Homodimer.

It is found in the cytoplasm. It catalyses the reaction 7-aminomethyl-7-carbaguanine + 2 NADP(+) = 7-cyano-7-deazaguanine + 2 NADPH + 3 H(+). The protein operates within tRNA modification; tRNA-queuosine biosynthesis. Functionally, catalyzes the NADPH-dependent reduction of 7-cyano-7-deazaguanine (preQ0) to 7-aminomethyl-7-deazaguanine (preQ1). The chain is NADPH-dependent 7-cyano-7-deazaguanine reductase from Burkholderia ambifaria (strain ATCC BAA-244 / DSM 16087 / CCUG 44356 / LMG 19182 / AMMD) (Burkholderia cepacia (strain AMMD)).